Reading from the N-terminus, the 380-residue chain is Probable inactive dehydrogenase easA (380 aa).

Residues 25–27, alanine 60, glutamine 102, and histidine 171 contribute to the FMN site; that span reads PMT. Substrate is bound by residues histidine 171 and asparagine 174. Residues lysine 223, glycine 299, 324–325, and arginine 325 each bind FMN; that span reads GR. Tyrosine 352 is a binding site for substrate.

It belongs to the NADH:flavin oxidoreductase/NADH oxidase family.

Its function is as follows. Probable inactive dehydrogenase; part of the gene cluster that mediates the biosynthesis of fungal ergot alkaloid. DmaW catalyzes the first step of ergot alkaloid biosynthesis by condensing dimethylallyl diphosphate (DMAP) and tryptophan to form 4-dimethylallyl-L-tryptophan. The second step is catalyzed by the methyltransferase easF that methylates 4-dimethylallyl-L-tryptophan in the presence of S-adenosyl-L-methionine, resulting in the formation of 4-dimethylallyl-L-abrine. The catalase easC and the FAD-dependent oxidoreductase easE then transform 4-dimethylallyl-L-abrine to chanoclavine-I which is further oxidized by easD in the presence of NAD(+), resulting in the formation of chanoclavine-I aldehyde. Agroclavine dehydrogenase easG then mediates the conversion of chanoclavine-I aldehyde to agroclavine via a non-enzymatic adduct reaction: the substrate is an iminium intermediate that is formed spontaneously from chanoclavine-I aldehyde in the presence of glutathione. The presence of easA is not required to complete this reaction. Further conversion of agroclavine to paspalic acid is a two-step process involving oxidation of agroclavine to elymoclavine and of elymoclavine to paspalic acid, the second step being performed by the elymoclavine oxidase cloA. Paspalic acid is then further converted to D-lysergic acid. Ergopeptines are assembled from D-lysergic acid and three different amino acids by the D-lysergyl-peptide-synthetases composed each of a monomudular and a trimodular nonribosomal peptide synthetase subunit. LpsB and lpsC encode the monomodular subunits responsible for D-lysergic acid activation and incorporation into the ergopeptine backbone. LpsA1 and A2 subunits encode the trimodular nonribosomal peptide synthetase assembling the tripeptide portion of ergopeptines. LpsA1 is responsible for formation of the major ergopeptine, ergotamine, and lpsA2 for alpha-ergocryptine, the minor ergopeptine of the total alkaloid mixture elaborated by C.purpurea. D-lysergyl-tripeptides are assembled by the nonribosomal peptide synthetases and released as N-(D-lysergyl-aminoacyl)-lactams. Cyclolization of the D-lysergyl-tripeptides is performed by the Fe(2+)/2-ketoglutarate-dependent dioxygenase easH which introduces a hydroxyl group into N-(D-lysergyl-aminoacyl)-lactam at alpha-C of the aminoacyl residue followed by spontaneous condensation with the terminal lactam carbonyl group. The sequence is that of Probable inactive dehydrogenase easA from Claviceps purpurea (Ergot fungus).